The following is a 67-amino-acid chain: Large ribosomal subunit protein bL35 (67 aa).

This sequence belongs to the bacterial ribosomal protein bL35 family.

The sequence is that of Large ribosomal subunit protein bL35 from Rhizorhabdus wittichii (strain DSM 6014 / CCUG 31198 / JCM 15750 / NBRC 105917 / EY 4224 / RW1) (Sphingomonas wittichii).